The chain runs to 688 residues: Envelope glycoprotein gp70 (688 aa).

A compositionally biased stretch (polar residues) spans 1–15 (MPNHQSGSPTGSSDL). The disordered stretch occupies residues 1 to 31 (MPNHQSGSPTGSSDLLLSGKKQRPHLALRRK). The signal sequence occupies residues 1 to 98 (MPNHQSGSPT…SVLGPPPVTG (98 aa)). The segment covering 20–31 (KKQRPHLALRRK) has biased composition (basic residues). Topologically, residues 99–624 (ESYWAYLPKP…ALNPLDWTQY (526 aa)) are extracellular. Residues asparagine 127 and asparagine 143 are each glycosylated (N-linked (GlcNAc...) asparagine; by host). Residues 426–474 (LLPVDIGDEPWFDDSAIQTFRYATDLIRAKRFVAAIILGISALIAIITS) are a coiled coil. Residues 455 to 456 (KR) constitute a propeptide that is removed on maturation. Residues 457 to 477 (FVAAIILGISALIAIITSFAV) are fusion peptide. The immunosuppression stretch occupies residues 463 to 481 (LGISALIAIITSFAVATTA). Asparagine 498 carries an N-linked (GlcNAc...) asparagine; by host glycan. The stretch at 511 to 541 (LKLEARLNALEEVVLELGQDVANLKTRMSTR) forms a coiled coil. Residue asparagine 557 is glycosylated (N-linked (GlcNAc...) asparagine; by host). Residues 625–645 (FIFIGVGALLLVIVLMIFPIV) traverse the membrane as a helical segment. Residues 646-688 (FQCLAKSLDQVQSDLNVLLLKKKKGGNAAPAAEMVELPRVSYT) are Cytoplasmic-facing.

In terms of assembly, the mature envelope protein (Env) consists of a trimer of SU-TM heterodimers attached by noncovalent interactions or by a labile interchain disulfide bond. Specific enzymatic cleavages in vivo yield mature proteins. Envelope glycoproteins are synthesized as an inactive precursor that is N-glycosylated and processed likely by host cell furin or by a furin-like protease in the Golgi to yield the mature SU and TM proteins. The cleavage site between SU and TM requires the minimal sequence [KR]-X-[KR]-R.

It is found in the virion membrane. It localises to the host cell membrane. In terms of biological role, the surface protein (SU) attaches the virus to the host cell by binding to its receptor. This interaction triggers the refolding of the transmembrane protein (TM) and is thought to activate its fusogenic potential by unmasking its fusion peptide. Fusion occurs at the host cell plasma membrane. Functionally, the transmembrane protein (TM) acts as a class I viral fusion protein. Under the current model, the protein has at least 3 conformational states: pre-fusion native state, pre-hairpin intermediate state, and post-fusion hairpin state. During viral and target cell membrane fusion, the coiled coil regions (heptad repeats) assume a trimer-of-hairpins structure, positioning the fusion peptide in close proximity to the C-terminal region of the ectodomain. The formation of this structure appears to drive apposition and subsequent fusion of viral and target cell membranes. Membranes fusion leads to delivery of the nucleocapsid into the cytoplasm. The chain is Envelope glycoprotein gp70 (env) from Mus musculus (Mouse).